A 678-amino-acid chain; its full sequence is THO complex subunit 5 homolog A (678 aa).

Disordered regions lie at residues 1–35 (MASDSLKKRKPKVNRNEDVKRGRHEDQEGRYYSEE) and 294–329 (ALFKPPEDSQDDESDSDAEEEQTTKRRRPTLGVQLD). The Nuclear localization signal motif lies at 7 to 10 (KKRK). The span at 14–35 (NRNEDVKRGRHEDQEGRYYSEE) shows a compositional bias: basic and acidic residues. Acidic residues predominate over residues 301-314 (DSQDDESDSDAEEE).

This sequence belongs to the THOC5 family. In terms of assembly, component of the THO subcomplex, which is composed of thoc1, thoc2, thoc3, thoc5, thoc6 and thoc7. Component of the transcription/export (TREX) complex at least composed of alyref/thoc4, ddx39b, sarnp/cip29, chtop and the THO subcomplex. Interacts with thoc7.

The protein resides in the nucleus. It is found in the nucleus speckle. It localises to the cytoplasm. Its function is as follows. Component of the THO subcomplex of the TREX complex which is thought to couple mRNA transcription, processing and nuclear export, and which specifically associates with spliced mRNA and not with unspliced pre-mRNA. Plays a key structural role in the oligomerization of the THO-ddx39b complex. TREX is recruited to spliced mRNAs by a transcription-independent mechanism, binds to mRNA upstream of the exon-junction complex (EJC) and is recruited in a splicing- and cap-dependent manner to a region near the 5' end of the mRNA where it functions in mRNA export to the cytoplasm via the TAP/NXF1 pathway. May be involved in cell differentiation. The polypeptide is THO complex subunit 5 homolog A (thoc5-a) (Xenopus laevis (African clawed frog)).